The sequence spans 187 residues: Elongation factor P (187 aa).

It belongs to the elongation factor P family.

It localises to the cytoplasm. It participates in protein biosynthesis; polypeptide chain elongation. In terms of biological role, involved in peptide bond synthesis. Stimulates efficient translation and peptide-bond synthesis on native or reconstituted 70S ribosomes in vitro. Probably functions indirectly by altering the affinity of the ribosome for aminoacyl-tRNA, thus increasing their reactivity as acceptors for peptidyl transferase. This chain is Elongation factor P, found in Gloeobacter violaceus (strain ATCC 29082 / PCC 7421).